A 335-amino-acid chain; its full sequence is MTHNIHDNISQWMKSNEETPIVMSSRIRLARNLENHVHPLMYATENDGFRVINEVQDALPNFELMRLDQMDQQSKMKMVAKHLISPELIKQPAAAVLVNDDESLSVMINEEDHIRIQAMGTDTTLQALYNQASSIDDELDRSLDISYDEQLGYLTTCPTNIGTGMRASVMLHLPGLSIMKRMTRIAQTINRFGYTIRGIYGEGSQVYGHTYQVSNQLTLGKSELEIIETLTEVVNQIIHEEKQIRQKLDTYNQLETQDRVFRSLGILQNCRMITMEEASYRLSEVKLGIDLNYIELQNFKFNELMVAIQSPFLLDEEDDKSVKEKRADILREHIK.

The Phosphagen kinase C-terminal domain maps to 21 to 244 (IVMSSRIRLA…NQIIHEEKQI (224 aa)). ATP-binding positions include 24-28 (SSRIR), H82, R115, 166-170 (RASVM), and 197-202 (RGIYGE).

It belongs to the ATP:guanido phosphotransferase family.

It carries out the reaction L-arginyl-[protein] + ATP = N(omega)-phospho-L-arginyl-[protein] + ADP + H(+). Its function is as follows. Catalyzes the specific phosphorylation of arginine residues in proteins. The polypeptide is Protein-arginine kinase (Staphylococcus aureus (strain USA300)).